The chain runs to 1225 residues: DNA-directed RNA polymerase subunit beta' (1225 aa).

Zn(2+) contacts are provided by Cys60, Cys62, Cys75, and Cys78. Mg(2+) is bound by residues Asp450, Asp452, and Asp454. 4 residues coordinate Zn(2+): Cys818, Cys892, Cys899, and Cys902.

This sequence belongs to the RNA polymerase beta' chain family. In terms of assembly, the RNAP catalytic core consists of 2 alpha, 1 beta, 1 beta' and 1 omega subunit. When a sigma factor is associated with the core the holoenzyme is formed, which can initiate transcription. Requires Mg(2+) as cofactor. Zn(2+) serves as cofactor.

It catalyses the reaction RNA(n) + a ribonucleoside 5'-triphosphate = RNA(n+1) + diphosphate. Functionally, DNA-dependent RNA polymerase catalyzes the transcription of DNA into RNA using the four ribonucleoside triphosphates as substrates. This is DNA-directed RNA polymerase subunit beta' from Streptococcus pneumoniae (strain P1031).